A 686-amino-acid chain; its full sequence is XK-related protein 5 (686 aa).

5 helical membrane-spanning segments follow: residues 33 to 53 (LLWG…QALS), 205 to 225 (HFWV…WLVA), 239 to 259 (LFNL…WDSP), 265 to 285 (VTFY…ATDF), and 297 to 317 (IAGV…YYSL). 3 disordered regions span residues 340–362 (DKTE…ESSG), 444–470 (LQRK…NSSA), and 490–589 (FASD…VGLA). Polar residues-rich tracts occupy residues 455 to 470 (LPSS…NSSA) and 490 to 509 (FASD…TQGE). The segment covering 523–536 (QGKGTGGQQRGGEG) has biased composition (gly residues). The segment covering 550–567 (VATSSQQEGSPATLQTAH) has biased composition (polar residues).

Belongs to the XK family.

The protein localises to the cell membrane. This Pan troglodytes (Chimpanzee) protein is XK-related protein 5.